A 91-amino-acid chain; its full sequence is Small ribosomal subunit protein uS19 (91 aa).

Belongs to the universal ribosomal protein uS19 family.

In terms of biological role, protein S19 forms a complex with S13 that binds strongly to the 16S ribosomal RNA. The protein is Small ribosomal subunit protein uS19 of Bordetella bronchiseptica (strain ATCC BAA-588 / NCTC 13252 / RB50) (Alcaligenes bronchisepticus).